We begin with the raw amino-acid sequence, 64 residues long: Large ribosomal subunit protein bL35 (64 aa).

Residues 1-10 (MPKMKTNSAA) show a composition bias toward polar residues. Residues 1-64 (MPKMKTNSAA…AKKLHQLLQK (64 aa)) form a disordered region. Residues 54 to 64 (QAKKLHQLLQK) show a composition bias toward basic residues.

It belongs to the bacterial ribosomal protein bL35 family.

This chain is Large ribosomal subunit protein bL35, found in Bifidobacterium longum (strain NCC 2705).